A 420-amino-acid chain; its full sequence is Phytoene synthase 1, chloroplastic (420 aa).

The N-terminal 70 residues, Met1–Tyr70, are a transit peptide targeting the chloroplast.

This sequence belongs to the phytoene/squalene synthase family. In terms of tissue distribution, expressed in leaves. Highly expressed in developing leaves. Expressed at low levels in roots.

The protein localises to the plastid. It is found in the chloroplast membrane. The protein resides in the chloroplast. Its subcellular location is the plastoglobule. It carries out the reaction 2 (2E,6E,10E)-geranylgeranyl diphosphate = 15-cis-phytoene + 2 diphosphate. Functionally, catalyzes the conversion of geranylgeranyl diphosphate to phytoene. Mediates the first committed step in carotenoid biosynthesis. The protein is Phytoene synthase 1, chloroplastic of Oryza sativa subsp. japonica (Rice).